Reading from the N-terminus, the 751-residue chain is MTISPPEREAKKVKIVVDRNPVATNFEKWAKPGHFSRTLSKGPTTTTWIWNLHADAHDFDTQTSDLEEISRKVFSAHFGQLGIIFIWLSGMYFHGARFSNYEAWLTDPTHIKPSAQVVWPIVGQEILNADVGGGFQGLQITSGFFQLWRASGITSELQLYTTAIGGLVMAAAMFFAGWFHYHKAAPKLEWFQNVESMLNHHLAGLLGLGSLAWAGHQIHVSLPINKLLDAGVDPKEIPLPHEFLFNPELMAQLYPSFAKGLAPFFTLDWAQYSDFLTFQGGLNPVTGGLWLTDTVHHHLAIAVLFLVAGHQYRTNWGIGSSLKEILEAHKGPFTGEGHKGLYEILTTSWHAQLAINLALFGSLSIIVSHHMYAMPPYPYLATDYGTQLSLFTHHMWIGGFCIVGAGAHAGIFMVRDYDPTNNYNNLLDRVLRHRDAMISHLNWVCIFLGFHSFGLYIHNDTMSALGRPQDMFSDTAIQLQPVFAQWVQNTHFLAPGFTAPNALASTSPSWGGDVVAVGGKVAMMPISLGTADFMVHHIHAFTIHVTVLILLKGVLYARSSRLIPDKANLGFRFPCDGPGRGGTCQVSAWDHVFLGLFWMYNSISIVIFHFSWKMQSDVWGTVSANGVSHITGGNFAQSANTINGWLRDFLWAQSSQVIQSYGSALSAYGLIFLGAHFVWAFSLMFLFSGRGYWQELIESIVWAHNKLKVAPAIQPRALSITQGRAVGVAHYLLGGIATTWSFFLARILAVG.

The next 8 helical transmembrane spans lie at 73–96 (VFSA…FHGA), 159–182 (LYTT…FHYH), 198–222 (LNHH…HVSL), 294–312 (TVHH…GHQY), 349–372 (WHAQ…HHMY), 388–414 (LSLF…IFMV), 436–458 (AMIS…LYIH), and 533–551 (FMVH…LILL). [4Fe-4S] cluster-binding residues include C575 and C584. Helical transmembrane passes span 591-612 (HVFL…HFSW) and 665-687 (LSAY…MFLF). H676 serves as a coordination point for chlorophyll a'. Chlorophyll a is bound by residues M684 and Y692. A phylloquinone-binding site is contributed by W693. Residues 725–745 (AVGVAHYLLGGIATTWSFFLA) traverse the membrane as a helical segment.

Belongs to the PsaA/PsaB family. As to quaternary structure, the PsaA/B heterodimer binds the P700 chlorophyll special pair and subsequent electron acceptors. PSI consists of a core antenna complex that captures photons, and an electron transfer chain that converts photonic excitation into a charge separation. The eukaryotic PSI reaction center is composed of at least 11 subunits. Requires P700 is a chlorophyll a/chlorophyll a' dimer, A0 is one or more chlorophyll a, A1 is one or both phylloquinones and FX is a shared 4Fe-4S iron-sulfur center. as cofactor.

It is found in the plastid. The protein localises to the chloroplast thylakoid membrane. It catalyses the reaction reduced [plastocyanin] + hnu + oxidized [2Fe-2S]-[ferredoxin] = oxidized [plastocyanin] + reduced [2Fe-2S]-[ferredoxin]. Functionally, psaA and PsaB bind P700, the primary electron donor of photosystem I (PSI), as well as the electron acceptors A0, A1 and FX. PSI is a plastocyanin/cytochrome c6-ferredoxin oxidoreductase, converting photonic excitation into a charge separation, which transfers an electron from the donor P700 chlorophyll pair to the spectroscopically characterized acceptors A0, A1, FX, FA and FB in turn. Oxidized P700 is reduced on the lumenal side of the thylakoid membrane by plastocyanin or cytochrome c6. This Chlorella vulgaris (Green alga) protein is Photosystem I P700 chlorophyll a apoprotein A1.